A 103-amino-acid chain; its full sequence is uncharacterized protein (103 aa).

2 helical membrane-spanning segments follow: residues 13–33 and 77–97; these read LLPF…YCIL and FSIY…PYLF.

It localises to the endoplasmic reticulum membrane. This is an uncharacterized protein from Schizosaccharomyces pombe (strain 972 / ATCC 24843) (Fission yeast).